Reading from the N-terminus, the 207-residue chain is Holliday junction branch migration complex subunit RuvA (207 aa).

Residues 1 to 64 form a domain I region; sequence MIGLINGQVQ…EDAQLLYGFI (64 aa). The tract at residues 65–143 is domain II; the sequence is DRKERDVFRQ…NIEVDSSHLE (79 aa). The flexible linker stretch occupies residues 144–152; sequence FAMQPAPIS. Positions 153-207 are domain III; it reads AEGSIIAEVEGALISLGYKEREAQQAIKAAKSNGETFADTQSLLKATLQQFQSFK.

Belongs to the RuvA family. Homotetramer. Forms an RuvA(8)-RuvB(12)-Holliday junction (HJ) complex. HJ DNA is sandwiched between 2 RuvA tetramers; dsDNA enters through RuvA and exits via RuvB. An RuvB hexamer assembles on each DNA strand where it exits the tetramer. Each RuvB hexamer is contacted by two RuvA subunits (via domain III) on 2 adjacent RuvB subunits; this complex drives branch migration. In the full resolvosome a probable DNA-RuvA(4)-RuvB(12)-RuvC(2) complex forms which resolves the HJ.

The protein localises to the cytoplasm. In terms of biological role, the RuvA-RuvB-RuvC complex processes Holliday junction (HJ) DNA during genetic recombination and DNA repair, while the RuvA-RuvB complex plays an important role in the rescue of blocked DNA replication forks via replication fork reversal (RFR). RuvA specifically binds to HJ cruciform DNA, conferring on it an open structure. The RuvB hexamer acts as an ATP-dependent pump, pulling dsDNA into and through the RuvAB complex. HJ branch migration allows RuvC to scan DNA until it finds its consensus sequence, where it cleaves and resolves the cruciform DNA. The protein is Holliday junction branch migration complex subunit RuvA of Psychrobacter cryohalolentis (strain ATCC BAA-1226 / DSM 17306 / VKM B-2378 / K5).